A 238-amino-acid chain; its full sequence is Endo-chitosanase (238 aa).

Positions 1-17 (MRLSEILTVALVTGATA) are cleaved as a signal peptide. N-linked (GlcNAc...) asparagine glycosylation is present at Asn83.

Belongs to the glycosyl hydrolase 75 family.

The protein resides in the secreted. The catalysed reaction is Endohydrolysis of beta-(1-&gt;4)-linkages between D-glucosamine residues in a partly acetylated chitosan.. Functionally, chitosanase catalyzing the endo-type cleavage of chitosan, the deacylated form of chitin. Chitosanase may be crucial in the degradation of the deacetylated portion of chitin in the fungal cell wall. Chitoolisaccharides produced by the hydrolysis of partially N-acetylated chitosan are known to have many biological activities, including antibacterial activity, immune-enhancing effects, and elicitor activity. The chitosans with higher degrees of deacetylation were shown to be the better substrates. Chitodimer, chitotrimer, and chitotetramer are the major products but monoacetyl chitodimer, monoacetyl chitotrimer, and monoacetyl chitotetramer are also produced. This chain is Endo-chitosanase (csn), found in Aspergillus fumigatus (Neosartorya fumigata).